We begin with the raw amino-acid sequence, 308 residues long: Transaldolase (308 aa).

The active-site Schiff-base intermediate with substrate is the Lys125.

The protein belongs to the transaldolase family. Type 1 subfamily. As to quaternary structure, homodimer.

Its subcellular location is the cytoplasm. The catalysed reaction is D-sedoheptulose 7-phosphate + D-glyceraldehyde 3-phosphate = D-erythrose 4-phosphate + beta-D-fructose 6-phosphate. Its pathway is carbohydrate degradation; pentose phosphate pathway; D-glyceraldehyde 3-phosphate and beta-D-fructose 6-phosphate from D-ribose 5-phosphate and D-xylulose 5-phosphate (non-oxidative stage): step 2/3. Functionally, transaldolase is important for the balance of metabolites in the pentose-phosphate pathway. This chain is Transaldolase, found in Stutzerimonas stutzeri (strain A1501) (Pseudomonas stutzeri).